The sequence spans 1381 residues: DNA-directed RNA polymerase subunit beta (1381 aa).

This sequence belongs to the RNA polymerase beta chain family. In terms of assembly, the RNAP catalytic core consists of 2 alpha, 1 beta, 1 beta' and 1 omega subunit. When a sigma factor is associated with the core the holoenzyme is formed, which can initiate transcription.

The enzyme catalyses RNA(n) + a ribonucleoside 5'-triphosphate = RNA(n+1) + diphosphate. In terms of biological role, DNA-dependent RNA polymerase catalyzes the transcription of DNA into RNA using the four ribonucleoside triphosphates as substrates. The sequence is that of DNA-directed RNA polymerase subunit beta from Halorhodospira halophila (strain DSM 244 / SL1) (Ectothiorhodospira halophila (strain DSM 244 / SL1)).